Reading from the N-terminus, the 107-residue chain is Probable antitoxin TacA (107 aa).

This sequence belongs to the TacA antitoxin family. As to quaternary structure, forms a complex with cognate antitoxin TacT.

Functionally, probable antitoxin component of a type II toxin-antitoxin (TA) system. Should neutralize cognate toxin TacT (y4aS). This chain is Probable antitoxin TacA, found in Sinorhizobium fredii (strain NBRC 101917 / NGR234).